The following is a 419-amino-acid chain: Effector protein BipC (419 aa).

2 disordered regions span residues Val62–Arg94 and Leu338–Gln402. Basic and acidic residues-rich tracts occupy residues Glu71–Arg94 and Thr380–Ala392.

The protein belongs to the SctB/SipC family.

It localises to the secreted. This chain is Effector protein BipC (bipC), found in Burkholderia pseudomallei (strain 1710b).